Here is a 312-residue protein sequence, read N- to C-terminus: Acetyl-coenzyme A carboxylase carboxyl transferase subunit alpha (312 aa).

The region spanning 36–286 (RLDKEVKSIY…KEYFLDALRT (251 aa)) is the CoA carboxyltransferase C-terminal domain.

The protein belongs to the AccA family. Acetyl-CoA carboxylase is a heterohexamer composed of biotin carboxyl carrier protein (AccB), biotin carboxylase (AccC) and two subunits each of ACCase subunit alpha (AccA) and ACCase subunit beta (AccD).

It localises to the cytoplasm. It carries out the reaction N(6)-carboxybiotinyl-L-lysyl-[protein] + acetyl-CoA = N(6)-biotinyl-L-lysyl-[protein] + malonyl-CoA. It functions in the pathway lipid metabolism; malonyl-CoA biosynthesis; malonyl-CoA from acetyl-CoA: step 1/1. Its function is as follows. Component of the acetyl coenzyme A carboxylase (ACC) complex. First, biotin carboxylase catalyzes the carboxylation of biotin on its carrier protein (BCCP) and then the CO(2) group is transferred by the carboxyltransferase to acetyl-CoA to form malonyl-CoA. This is Acetyl-coenzyme A carboxylase carboxyl transferase subunit alpha from Helicobacter pylori (strain HPAG1).